The following is a 159-amino-acid chain: Vesicle transport protein SFT2A (159 aa).

Residues 1–36 (MEKLRRVLSGQDDEEQGLTAQVLDASSLSFNTRLKW) lie on the Cytoplasmic side of the membrane. Residue Ser-9 is modified to Phosphoserine. A helical membrane pass occupies residues 37–57 (FVICFVAGIFFSFLGTGLLWL). Topologically, residues 58–62 (PNGMK) are lumenal. The helical transmembrane segment at 63 to 83 (LFAVFYTLGNLAALASTCFLM) threads the bilayer. The Cytoplasmic segment spans residues 84-97 (GPVKQLKKMFETTR). A helical membrane pass occupies residues 98 to 118 (LLATIIMLLCLVFTLCAALWW). The Lumenal portion of the chain corresponds to 119–122 (RKKG). The chain crosses the membrane as a helical span at residues 123 to 143 (LALLFCILQFLSMTWYSLSYI). Residues 144-159 (PYARDAVLKCCSSLLG) are Cytoplasmic-facing.

Belongs to the SFT2 family.

The protein resides in the membrane. In terms of biological role, may be involved in fusion of retrograde transport vesicles derived from an endocytic compartment with the Golgi complex. This is Vesicle transport protein SFT2A from Mus musculus (Mouse).